Here is an 876-residue protein sequence, read N- to C-terminus: Phosphoenolpyruvate carboxylase (876 aa).

Active-site residues include His138 and Lys543.

This sequence belongs to the PEPCase type 1 family. The cofactor is Mg(2+).

It carries out the reaction oxaloacetate + phosphate = phosphoenolpyruvate + hydrogencarbonate. Its function is as follows. Forms oxaloacetate, a four-carbon dicarboxylic acid source for the tricarboxylic acid cycle. In Vibrio atlanticus (strain LGP32) (Vibrio splendidus (strain Mel32)), this protein is Phosphoenolpyruvate carboxylase.